We begin with the raw amino-acid sequence, 344 residues long: Beta-1,4-galactosyltransferase 4 (344 aa).

Over 1 to 12 (MGFNLTFHLSYK) the chain is Cytoplasmic. A helical; Signal-anchor for type II membrane protein membrane pass occupies residues 13-38 (FRLLLLLTLCLTVVGWATSNYFVGAI). The Lumenal segment spans residues 39–344 (QEIPKAKEFM…NITVDFWFGA (306 aa)). The cysteines at positions 77 and 118 are disulfide-linked. Residues 129 to 133 (PHRNR), 168 to 170 (FNR), and 195 to 196 (VD) contribute to the UDP-alpha-D-galactose site. A disulfide bond links C189 and C208. D196 is a Mn(2+) binding site. N-linked (GlcNAc...) asparagine glycosylation is present at N220. Positions 224 and 256 each coordinate UDP-alpha-D-galactose. 258–261 (GEDD) provides a ligand contact to N-acetyl-D-glucosamine. Position 289 (H289) interacts with Mn(2+). Residue 289-291 (HTR) coordinates UDP-alpha-D-galactose. R301 serves as a coordination point for N-acetyl-D-glucosamine. An N-linked (GlcNAc...) asparagine glycan is attached at N335.

It belongs to the glycosyltransferase 7 family. In terms of assembly, interacts with SLC35A2 (isoform 2; UGT1). It depends on Mn(2+) as a cofactor. In terms of processing, N-glycosylated. Highest expression is observed in placenta, pancreas, kidney and heart. Expressed in corneal epithelial cells.

Its subcellular location is the golgi apparatus membrane. The protein localises to the secreted. The catalysed reaction is N-acetyl-D-glucosamine + UDP-alpha-D-galactose = beta-D-galactosyl-(1-&gt;4)-N-acetyl-D-glucosamine + UDP + H(+). It carries out the reaction a beta-D-GlcNAc-(1-&gt;3)-beta-D-Gal-(1-&gt;4)-beta-D-Glc-(1&lt;-&gt;1)-Cer(d18:1(4E)) + UDP-alpha-D-galactose = a neolactoside nLc4Cer(d18:1(4E)) + UDP + H(+). The enzyme catalyses 3-O-{beta-D-galactosyl-(1-&gt;3)-[6-O-sulfo-N-acetyl-beta-D-glucosaminyl-(1-&gt;6)]-N-acetyl-alpha-D-galactosaminyl}-L-seryl-[protein] + UDP-alpha-D-galactose = 3-O-{beta-D-galactosyl-(1-&gt;3)-[beta-D-galactosyl-(1-&gt;4)-6-O-sulfo-N-acetyl-beta-D-glucosaminyl-(1-&gt;6)]-N-acetyl-alpha-D-galactosaminyl}-L-seryl-[protein] + UDP + H(+). It catalyses the reaction 3-O-{beta-D-galactosyl-(1-&gt;3)-[6-O-sulfo-N-acetyl-beta-D-glucosaminyl-(1-&gt;6)]-N-acetyl-alpha-D-galactosaminyl}-L-threonyl-[protein] + UDP-alpha-D-galactose = 3-O-{beta-D-galactosyl-(1-&gt;3)-[beta-D-galactosyl-(1-&gt;4)-6-O-sulfo-N-acetyl-beta-D-glucosaminyl-(1-&gt;6)]-N-acetyl-alpha-D-galactosaminyl}-L-threonyl-[protein] + UDP + H(+). The protein operates within protein modification; protein glycosylation. Its pathway is glycolipid biosynthesis. Its activity is regulated as follows. Up-regulated by LALBA. Galactose (Gal) transferase involved in the synthesis of terminal N-acetyllactosamine (LacNac) unit present on glycan chains of glycoproteins and glycosphingolipids. Catalyzes the transfer of Gal residue via a beta1-&gt;4 linkage from UDP-Gal to the non-reducing terminal N-acetyl glucosamine 6-O-sulfate (6-O-sulfoGlcNAc) in the linearly growing chain of both N- and O-linked keratan sulfate proteoglycans. Cooperates with B3GNT7 N-acetyl glucosamine transferase and CHST6 and CHST1 sulfotransferases to construct and elongate mono- and disulfated disaccharide units [-&gt;3Galbeta1-&gt;4(6-sulfoGlcNAcbeta)1-&gt;] and [-&gt;3(6-sulfoGalbeta)1-&gt;4(6-sulfoGlcNAcbeta)1-&gt;] within keratan sulfate polymer. Transfers Gal residue via a beta1-&gt;4 linkage to terminal 6-O-sulfoGlcNAc within the LacNac unit of core 2 O-glycans forming 6-sulfo-sialyl-Lewis X (sLex). May contribute to the generation of sLex epitope on mucin-type glycoproteins that serve as ligands for SELL/L-selectin, a major regulator of leukocyte migration. In the biosynthesis pathway of neolacto-series glycosphingolipids, transfers Gal residue via a beta1-&gt;4 linkage to terminal GlcNAc of a lactotriaosylceramide (Lc3Cer) acceptor to form a neolactotetraosylceramide. This chain is Beta-1,4-galactosyltransferase 4, found in Homo sapiens (Human).